Consider the following 243-residue polypeptide: Ribonuclease PH (243 aa).

Phosphate is bound by residues Arg-84 and 122 to 124 (GTR).

The protein belongs to the RNase PH family. Homohexameric ring arranged as a trimer of dimers.

It carries out the reaction tRNA(n+1) + phosphate = tRNA(n) + a ribonucleoside 5'-diphosphate. Phosphorolytic 3'-5' exoribonuclease that plays an important role in tRNA 3'-end maturation. Removes nucleotide residues following the 3'-CCA terminus of tRNAs; can also add nucleotides to the ends of RNA molecules by using nucleoside diphosphates as substrates, but this may not be physiologically important. Probably plays a role in initiation of 16S rRNA degradation (leading to ribosome degradation) during starvation. The protein is Ribonuclease PH of Bdellovibrio bacteriovorus (strain ATCC 15356 / DSM 50701 / NCIMB 9529 / HD100).